Consider the following 367-residue polypeptide: tRNA/tmRNA (uracil-C(5))-methyltransferase (367 aa).

Residues Q190, Y218, N223, E239, and D299 each contribute to the S-adenosyl-L-methionine site. C324 acts as the Nucleophile in catalysis. E358 acts as the Proton acceptor in catalysis.

Belongs to the class I-like SAM-binding methyltransferase superfamily. RNA M5U methyltransferase family. TrmA subfamily.

It catalyses the reaction uridine(54) in tRNA + S-adenosyl-L-methionine = 5-methyluridine(54) in tRNA + S-adenosyl-L-homocysteine + H(+). It carries out the reaction uridine(341) in tmRNA + S-adenosyl-L-methionine = 5-methyluridine(341) in tmRNA + S-adenosyl-L-homocysteine + H(+). Its function is as follows. Dual-specificity methyltransferase that catalyzes the formation of 5-methyluridine at position 54 (m5U54) in all tRNAs, and that of position 341 (m5U341) in tmRNA (transfer-mRNA). This chain is tRNA/tmRNA (uracil-C(5))-methyltransferase, found in Pectobacterium carotovorum subsp. carotovorum (strain PC1).